A 709-amino-acid chain; its full sequence is Ribosomal RNA large subunit methyltransferase K/L (709 aa).

Residues 43-154 (LAYRITLWTR…NGVITIAMNF (112 aa)) form the THUMP domain.

Belongs to the methyltransferase superfamily. RlmKL family.

Its subcellular location is the cytoplasm. It catalyses the reaction guanosine(2445) in 23S rRNA + S-adenosyl-L-methionine = N(2)-methylguanosine(2445) in 23S rRNA + S-adenosyl-L-homocysteine + H(+). It carries out the reaction guanosine(2069) in 23S rRNA + S-adenosyl-L-methionine = N(2)-methylguanosine(2069) in 23S rRNA + S-adenosyl-L-homocysteine + H(+). Specifically methylates the guanine in position 2445 (m2G2445) and the guanine in position 2069 (m7G2069) of 23S rRNA. The protein is Ribosomal RNA large subunit methyltransferase K/L of Shewanella baltica (strain OS195).